A 344-amino-acid polypeptide reads, in one-letter code: Anthranilate phosphoribosyltransferase (344 aa).

Residues Gly84, Gly87 to Asp88, Thr92, Asn94 to Thr97, Lys112 to Ser120, and Ser124 each bind 5-phospho-alpha-D-ribose 1-diphosphate. Gly84 provides a ligand contact to anthranilate. Residue Ser96 participates in Mg(2+) binding. An anthranilate-binding site is contributed by Asn115. Arg170 contributes to the anthranilate binding site. The Mg(2+) site is built by Asp229 and Glu230.

The protein belongs to the anthranilate phosphoribosyltransferase family. In terms of assembly, homodimer. The cofactor is Mg(2+).

It carries out the reaction N-(5-phospho-beta-D-ribosyl)anthranilate + diphosphate = 5-phospho-alpha-D-ribose 1-diphosphate + anthranilate. It functions in the pathway amino-acid biosynthesis; L-tryptophan biosynthesis; L-tryptophan from chorismate: step 2/5. Its function is as follows. Catalyzes the transfer of the phosphoribosyl group of 5-phosphorylribose-1-pyrophosphate (PRPP) to anthranilate to yield N-(5'-phosphoribosyl)-anthranilate (PRA). The polypeptide is Anthranilate phosphoribosyltransferase (Xylella fastidiosa (strain M23)).